Consider the following 60-residue polypeptide: Large ribosomal subunit protein bL32 (60 aa).

The disordered stretch occupies residues 1-22 (MAVPARHTSKAKKNKRRTHYKL). A compositionally biased stretch (basic residues) spans 7–20 (HTSKAKKNKRRTHY).

This sequence belongs to the bacterial ribosomal protein bL32 family.

The sequence is that of Large ribosomal subunit protein bL32 from Streptococcus pyogenes serotype M3 (strain ATCC BAA-595 / MGAS315).